We begin with the raw amino-acid sequence, 382 residues long: Homoserine O-succinyltransferase (382 aa).

One can recognise an AB hydrolase-1 domain in the interval 51-359 (NAVLICHALS…DAPWGHDAFL (309 aa)). Serine 157 functions as the Nucleophile in the catalytic mechanism. Residue arginine 227 participates in substrate binding. Active-site residues include aspartate 322 and histidine 355. Aspartate 356 lines the substrate pocket.

This sequence belongs to the AB hydrolase superfamily. MetX family. In terms of assembly, homodimer.

It localises to the cytoplasm. The enzyme catalyses L-homoserine + succinyl-CoA = O-succinyl-L-homoserine + CoA. It participates in amino-acid biosynthesis; L-methionine biosynthesis via de novo pathway; O-succinyl-L-homoserine from L-homoserine: step 1/1. Functionally, transfers a succinyl group from succinyl-CoA to L-homoserine, forming succinyl-L-homoserine. This is Homoserine O-succinyltransferase from Marinobacter nauticus (strain ATCC 700491 / DSM 11845 / VT8) (Marinobacter aquaeolei).